Consider the following 628-residue polypeptide: (-)-beta-pinene synthase 1, chloroplastic (628 aa).

The N-terminal 51 residues, 1-51 (MDLISVLPSASKSCVCLHKPLSSSTHKLKPFCRTIRILGMPRPRKSVLMVS), are a transit peptide targeting the chloroplast. Mg(2+) contacts are provided by Asp-379, Asp-383, and Asp-531. The DDXXD motif motif lies at 379 to 383 (DDMYD).

Belongs to the terpene synthase family. Tpsd subfamily. Requires Mg(2+) as cofactor. It depends on Mn(2+) as a cofactor.

It is found in the plastid. Its subcellular location is the chloroplast. The enzyme catalyses (2E)-geranyl diphosphate = (1S,5S)-beta-pinene + diphosphate. The catalysed reaction is (2E)-geranyl diphosphate = (1S,5S)-alpha-pinene + diphosphate. It functions in the pathway terpene metabolism; oleoresin biosynthesis. Its pathway is secondary metabolite biosynthesis; terpenoid biosynthesis. In terms of biological role, monoterpene synthase (TPS) involved in the biosynthesis of monoterpene natural products included in conifer oleoresin secretions and volatile emissions; these compounds contribute to biotic and abiotic stress defense against herbivores and pathogens. Catalyzes the conversion of (2E)-geranyl diphosphate (GPP) to (-)-beta-pinene and, to a lower extent, to (-)-alpha-pinene. This is (-)-beta-pinene synthase 1, chloroplastic from Pinus banksiana (Jack pine).